A 67-amino-acid polypeptide reads, in one-letter code: Beta-defensin 103 (67 aa).

The signal sequence occupies residues 1–22 (MRIHYLLFALLFLFLVPVPGHG). Cystine bridges form between C33-C62, C40-C55, and C45-C63.

Highly expressed in skin and tonsils, and to a lesser extent in trachea, uterus, kidney, thymus, adenoid, pharynx and tongue. Low expression in salivary gland, bone marrow, colon, stomach, polyp and larynx. No expression in small intestine.

The protein localises to the secreted. Exhibits antimicrobial activity against Gram-positive bacteria S.aureus and S.pyogenes, Gram-negative bacteria P.aeruginosa and E.coli and the yeast C.albicans. Kills multiresistant S.aureus and vancomycin-resistant E.faecium. No significant hemolytic activity was observed. In Homo sapiens (Human), this protein is Beta-defensin 103 (DEFB103A).